The primary structure comprises 125 residues: 14 kDa phosphohistidine phosphatase (125 aa).

A2 bears the N-acetylalanine mark. Residue K21 coordinates substrate. The active-site Proton acceptor is the H53. A substrate-binding site is contributed by 94–96 (SMA).

The protein belongs to the janus family. Monomer. As to expression, expressed abundantly in heart and skeletal muscle.

Its subcellular location is the cytoplasm. The enzyme catalyses N(pros)-phospho-L-histidyl-[protein] + H2O = L-histidyl-[protein] + phosphate. It catalyses the reaction N(tele)-phospho-L-histidyl-[protein] + H2O = L-histidyl-[protein] + phosphate. In terms of biological role, exhibits phosphohistidine phosphatase activity. The sequence is that of 14 kDa phosphohistidine phosphatase (PHPT1) from Homo sapiens (Human).